The chain runs to 421 residues: Serine--tRNA ligase (421 aa).

L-serine is bound at residue 229-231; that stretch reads TSE. Residues 260-262 and Val-276 each bind ATP; that span reads RKE. Glu-283 contributes to the L-serine binding site. 347-350 is an ATP binding site; that stretch reads EIVS. Position 383 (Thr-383) interacts with L-serine.

It belongs to the class-II aminoacyl-tRNA synthetase family. Type-1 seryl-tRNA synthetase subfamily. As to quaternary structure, homodimer. The tRNA molecule binds across the dimer.

It is found in the cytoplasm. It carries out the reaction tRNA(Ser) + L-serine + ATP = L-seryl-tRNA(Ser) + AMP + diphosphate + H(+). The catalysed reaction is tRNA(Sec) + L-serine + ATP = L-seryl-tRNA(Sec) + AMP + diphosphate + H(+). Its pathway is aminoacyl-tRNA biosynthesis; selenocysteinyl-tRNA(Sec) biosynthesis; L-seryl-tRNA(Sec) from L-serine and tRNA(Sec): step 1/1. Its function is as follows. Catalyzes the attachment of serine to tRNA(Ser). Is also able to aminoacylate tRNA(Sec) with serine, to form the misacylated tRNA L-seryl-tRNA(Sec), which will be further converted into selenocysteinyl-tRNA(Sec). The chain is Serine--tRNA ligase from Nitrosopumilus maritimus (strain SCM1).